Here is a 701-residue protein sequence, read N- to C-terminus: Elongation factor G 1 (701 aa).

The tr-type G domain occupies 8-290 (ERYRNIGISA…AVIDYLPSPL (283 aa)). GTP is bound by residues 17 to 24 (AHIDAGKT), 88 to 92 (DTPGH), and 142 to 145 (NKMD).

This sequence belongs to the TRAFAC class translation factor GTPase superfamily. Classic translation factor GTPase family. EF-G/EF-2 subfamily.

Its subcellular location is the cytoplasm. In terms of biological role, catalyzes the GTP-dependent ribosomal translocation step during translation elongation. During this step, the ribosome changes from the pre-translocational (PRE) to the post-translocational (POST) state as the newly formed A-site-bound peptidyl-tRNA and P-site-bound deacylated tRNA move to the P and E sites, respectively. Catalyzes the coordinated movement of the two tRNA molecules, the mRNA and conformational changes in the ribosome. This Paraburkholderia xenovorans (strain LB400) protein is Elongation factor G 1.